The following is a 354-amino-acid chain: Alanine racemase (354 aa).

The Proton acceptor; specific for D-alanine role is filled by Lys33. An N6-(pyridoxal phosphate)lysine modification is found at Lys33. Arg127 serves as a coordination point for substrate. The active-site Proton acceptor; specific for L-alanine is Tyr251. Met299 is a substrate binding site.

It belongs to the alanine racemase family. The cofactor is pyridoxal 5'-phosphate.

It catalyses the reaction L-alanine = D-alanine. It participates in amino-acid biosynthesis; D-alanine biosynthesis; D-alanine from L-alanine: step 1/1. In terms of biological role, catalyzes the interconversion of L-alanine and D-alanine. May also act on other amino acids. This Fusobacterium nucleatum subsp. nucleatum (strain ATCC 25586 / DSM 15643 / BCRC 10681 / CIP 101130 / JCM 8532 / KCTC 2640 / LMG 13131 / VPI 4355) protein is Alanine racemase (alr).